The chain runs to 42 residues: Thymosin beta-10 (42 aa).

Basic and acidic residues-rich tracts occupy residues 1 to 25 (MADKPDMGEINSFDKAKLKKTETQE) and 33 to 42 (ETIEQEKQAK). Residues 1–42 (MADKPDMGEINSFDKAKLKKTETQEKNTLPTKETIEQEKQAK) form a disordered region. An N-acetylalanine modification is found at Ala-2. Lys-4 is subject to N6-acetyllysine. Ser-12 carries the phosphoserine modification. At Lys-15 the chain carries N6-acetyllysine. Phosphothreonine occurs at positions 21, 23, and 34. Residue Lys-39 is modified to N6-acetyllysine.

The protein belongs to the thymosin beta family.

Its subcellular location is the cytoplasm. The protein resides in the cytoskeleton. Plays an important role in the organization of the cytoskeleton. Binds to and sequesters actin monomers (G actin) and therefore inhibits actin polymerization. In Sus scrofa (Pig), this protein is Thymosin beta-10 (TMSB10).